A 207-amino-acid chain; its full sequence is MKLLHLDSSPRGERSISRSLTQQFVSLWKQMHLDVPVIYRDLGRYPVPAIDEAWIAAAFCPPAQLTPELQSALMISDELIAELLAANLYIFGIPMYNYSVPASFKAYIDQIVRVRRTFVVSADGYEGLLKDKKVLVITTRGGSYAGEPLDFQEPYLRAVFGFIGITDVTFIHAENLAIGSEERQLAIATAHEAIQQVVKTWQSSTCI.

Residues Ser9, 15–17 (SIS), and 139–142 (TRGG) each bind FMN.

The protein belongs to the azoreductase type 1 family. As to quaternary structure, homodimer. Requires FMN as cofactor.

The catalysed reaction is 2 a quinone + NADH + H(+) = 2 a 1,4-benzosemiquinone + NAD(+). It catalyses the reaction N,N-dimethyl-1,4-phenylenediamine + anthranilate + 2 NAD(+) = 2-(4-dimethylaminophenyl)diazenylbenzoate + 2 NADH + 2 H(+). Its function is as follows. Quinone reductase that provides resistance to thiol-specific stress caused by electrophilic quinones. In terms of biological role, also exhibits azoreductase activity. Catalyzes the reductive cleavage of the azo bond in aromatic azo compounds to the corresponding amines. The protein is FMN-dependent NADH:quinone oxidoreductase 1 of Trichormus variabilis (strain ATCC 29413 / PCC 7937) (Anabaena variabilis).